We begin with the raw amino-acid sequence, 299 residues long: Ankyrin repeat domain-containing protein 54 (299 aa).

The interval 1 to 27 is disordered; that stretch reads MAATGGGAEDESRSGRSSSEGECAVAP. N-acetylalanine is present on A2. A Phosphoserine modification is found at S62. Residues 98 to 116 carry the Nuclear localization signal (NLS) motif; the sequence is RRLGPTGKEVHALKRLRDS. 4 ANK repeats span residues 108-137, 141-170, 174-203, and 207-239; these read HALK…DPCA, KGRT…DPNQ, LGNT…RVDA, and AGRT…EVKQ. The LYN-binding stretch occupies residues 140 to 240; sequence DKGRTALHFA…EAVRLEVKQI (101 aa). The short motif at 282–292 is the Nuclear export signal (NES) element; the sequence is LLASFTSLSLQ.

As to quaternary structure, interacts (via ankyrin repeat region) with LYN (via SH3-domain) in an activation-independent status of LYN. Forms a multiprotein complex with LYN and HCLS1. Interacts with TSN2, VAV1, DBNL and LASP1.

It is found in the nucleus. It localises to the cytoplasm. The protein resides in the midbody. Functionally, plays an important role in regulating intracellular signaling events associated with erythroid terminal differentiation. The polypeptide is Ankyrin repeat domain-containing protein 54 (Ankrd54) (Rattus norvegicus (Rat)).